We begin with the raw amino-acid sequence, 425 residues long: GTPase Obg (425 aa).

The Obg domain occupies 1 to 158 (MFVDQVKVYV…RYIVMELKLI (158 aa)). Residues 118 to 144 (KGGRGGRGNNRFANSSNPAPHISENGE) form a disordered region. An OBG-type G domain is found at 159–327 (ADVGLVGYPS…LMYAIGDTLA (169 aa)). ATP-binding positions include 165-172 (GYPSVGKS), 190-194 (FTTLT), 211-214 (DLPG), 281-284 (NKME), and 308-310 (SAA). Positions 172 and 192 each coordinate Mg(2+). An OCT domain is found at 348-425 (RAEKEPDAFE…IGKLEFDFVE (78 aa)).

It belongs to the TRAFAC class OBG-HflX-like GTPase superfamily. OBG GTPase family. In terms of assembly, monomer. Mg(2+) serves as cofactor.

The protein resides in the cytoplasm. An essential GTPase which binds GTP, GDP and possibly (p)ppGpp with moderate affinity, with high nucleotide exchange rates and a fairly low GTP hydrolysis rate. Plays a role in control of the cell cycle, stress response, ribosome biogenesis and in those bacteria that undergo differentiation, in morphogenesis control. In Brevibacillus brevis (strain 47 / JCM 6285 / NBRC 100599), this protein is GTPase Obg.